The primary structure comprises 282 residues: 2-dehydro-3-deoxyphosphooctonate aldolase (282 aa).

The protein belongs to the KdsA family.

The protein localises to the cytoplasm. It carries out the reaction D-arabinose 5-phosphate + phosphoenolpyruvate + H2O = 3-deoxy-alpha-D-manno-2-octulosonate-8-phosphate + phosphate. The protein operates within carbohydrate biosynthesis; 3-deoxy-D-manno-octulosonate biosynthesis; 3-deoxy-D-manno-octulosonate from D-ribulose 5-phosphate: step 2/3. It participates in bacterial outer membrane biogenesis; lipopolysaccharide biosynthesis. The chain is 2-dehydro-3-deoxyphosphooctonate aldolase from Shewanella amazonensis (strain ATCC BAA-1098 / SB2B).